The sequence spans 293 residues: tRNA-cytidine(32) 2-sulfurtransferase (293 aa).

A PP-loop motif motif is present at residues 62–67 (SGGKDS). Residues C137, C140, and C228 each contribute to the [4Fe-4S] cluster site.

It belongs to the TtcA family. Homodimer. The cofactor is Mg(2+). It depends on [4Fe-4S] cluster as a cofactor.

Its subcellular location is the cytoplasm. It catalyses the reaction cytidine(32) in tRNA + S-sulfanyl-L-cysteinyl-[cysteine desulfurase] + AH2 + ATP = 2-thiocytidine(32) in tRNA + L-cysteinyl-[cysteine desulfurase] + A + AMP + diphosphate + H(+). Its pathway is tRNA modification. Catalyzes the ATP-dependent 2-thiolation of cytidine in position 32 of tRNA, to form 2-thiocytidine (s(2)C32). The sulfur atoms are provided by the cysteine/cysteine desulfurase (IscS) system. This Brucella melitensis biotype 1 (strain ATCC 23456 / CCUG 17765 / NCTC 10094 / 16M) protein is tRNA-cytidine(32) 2-sulfurtransferase.